The sequence spans 310 residues: MMTDSAPPEPIHAEIPEGWLHKAKTLSEALPYMRRFAGLTIVIKYGGHAMGDPELAKTFARDVVLLKQVGMNPVVVHGGGPQIGRMLDTLRIQSTFIDGLRVTDAATVDVVEMVLAGSINKAIVTEINQAGGCAVGLSGKDGRLIQARKMVRKRHDPESNIERVLDLGFVGEPVVIDPHVLIQFRDSDIIPVIAPIGIGEAGETFNINADTAAGALAAQMKAARLLMLTDVKGVLDKDKQLIQELSVDRARLLKQEGTISGGMIPKVETCIDAVERGVEAAVIVDGRVPHAVLLEIFTPRGAGTLIRASR.

Residues 79–80 (GG), R101, and N206 contribute to the substrate site.

It belongs to the acetylglutamate kinase family. ArgB subfamily.

It is found in the cytoplasm. It catalyses the reaction N-acetyl-L-glutamate + ATP = N-acetyl-L-glutamyl 5-phosphate + ADP. It participates in amino-acid biosynthesis; L-arginine biosynthesis; N(2)-acetyl-L-ornithine from L-glutamate: step 2/4. Catalyzes the ATP-dependent phosphorylation of N-acetyl-L-glutamate. The polypeptide is Acetylglutamate kinase (Rhodospirillum rubrum (strain ATCC 11170 / ATH 1.1.1 / DSM 467 / LMG 4362 / NCIMB 8255 / S1)).